A 493-amino-acid chain; its full sequence is Na(+)/H(+) antiporter subunit D (493 aa).

Helical transmembrane passes span 3–23 (NFVI…IFMT), 31–51 (IFST…VQTV), 77–97 (FASL…LYSF), 107–127 (SFYY…FLTG), 129–149 (LFNM…LIVL), 163–183 (IVFN…LYAV), 203–223 (GLIT…GGIF), 227–247 (FWLP…FGAL), 251–271 (VGLY…TAFT), 274–294 (LMIW…LAYS), 299–319 (IVIY…AVHT), 330–350 (LIHD…LIAL), 370–390 (GWMF…SGFV), 407–427 (ISML…RIFI), and 449–469 (LYPA…TEWV).

Belongs to the CPA3 antiporters (TC 2.A.63) subunit D family. Forms a heterooligomeric complex that consists of seven subunits: MrpA, MrpB, MrpC, MrpD, MrpE, MrpF and MrpG.

The protein resides in the cell membrane. Functionally, mrp complex is a Na(+)/H(+) antiporter that is considered to be the major Na(+) excretion system in B.subtilis. Has a major role in Na(+) resistance and a minor role in Na(+)- and K(+)-dependent pH homeostasis as compared to TetB. MrpA may be the actual Na(+)/H(+) antiporter, although the six other Mrp proteins are all required for Na(+)/H(+) antiport activity and Na(+) resistance. MrpA is required for initiation of sporulation when external Na(+) concentration increases. Also transports Li(+) but not K(+), Ca(2+) or Mg(2+). This is Na(+)/H(+) antiporter subunit D (mrpD) from Bacillus subtilis (strain 168).